The primary structure comprises 389 residues: Smad nuclear interacting protein 1 (389 aa).

Over residues 1–10 (MKAGKSERER) the composition is skewed to basic and acidic residues. A disordered region spans residues 1–212 (MKAGKSERER…GNKNKEVPVK (212 aa)). Serine 18 is subject to Phosphoserine. A Glycyl lysine isopeptide (Lys-Gly) (interchain with G-Cter in SUMO); alternate cross-link involves residue lysine 28. A Glycyl lysine isopeptide (Lys-Gly) (interchain with G-Cter in SUMO1); alternate cross-link involves residue lysine 28. Lysine 28 participates in a covalent cross-link: Glycyl lysine isopeptide (Lys-Gly) (interchain with G-Cter in SUMO2); alternate. The span at 28–43 (KQERLSPEPVAHRRPD) shows a compositional bias: basic and acidic residues. Serine 33 and serine 48 each carry phosphoserine. Residues 54–72 (AESGSAGHRGSRARGASRS) show a composition bias toward low complexity. Over residues 73–95 (PAKKKSKSSGRRSKSPRTKRSRS) the composition is skewed to basic residues. Position 95 is a phosphoserine (serine 95). Basic and acidic residues-rich tracts occupy residues 103 to 138 (VKQEREDHPRRGREDRQHRELSEQEHRRARNSERDR) and 147 to 163 (RSSDERPVSGQGRDRDS). Lysine 104 participates in a covalent cross-link: Glycyl lysine isopeptide (Lys-Gly) (interchain with G-Cter in SUMO2). Phosphoserine is present on serine 149. Residues 166–197 (LQAQEEERDFNNARRREHRQQNESAGAEAQEV) adopt a coiled-coil conformation. A Glycyl lysine isopeptide (Lys-Gly) (interchain with G-Cter in SUMO2) cross-link involves residue lysine 214. The 64-residue stretch at 272 to 335 (YLLGRHRRIA…NGTFLNNKRI (64 aa)) folds into the FHA domain. Basic and acidic residues predominate over residues 363 to 373 (ESSDTSELDRK). A disordered region spans residues 363–389 (ESSDTSELDRKEDEDEEEEEEMVSDSS). Residues 374-389 (EDEDEEEEEEMVSDSS) show a composition bias toward acidic residues. Position 386 is a phosphoserine (serine 386).

In terms of assembly, component of activated spliceosome complexes. Component of the minor spliceosome, which splices U12-type introns. Binds SMAD4 and CREBBP/EP300. Binds the SMAD1/OAZ1/PSMB4 complex. Interacts with DROSHA and SMARCA4. Component of the SNARP complex which consists at least of SNIP1, SNW1, THRAP3, BCLAF1 and PNN. Post-translationally, degraded by the proteasome upon binding to the SMAD1/OAZ1/PSMB4 complex.

It localises to the nucleus. Functionally, required for pre-mRNA splicing as component of the spliceosome. As a component of the minor spliceosome, involved in the splicing of U12-type introns in pre-mRNAs. Down-regulates NF-kappa-B signaling by competing with RELA for CREBBP/EP300 binding. Involved in the microRNA (miRNA) biogenesis. May be involved in cyclin-D1/CCND1 mRNA stability through the SNARP complex which associates with both the 3'end of the CCND1 gene and its mRNA. In Rattus norvegicus (Rat), this protein is Smad nuclear interacting protein 1 (Snip1).